Here is a 420-residue protein sequence, read N- to C-terminus: Reticulon-4 receptor-like 2 (420 aa).

A signal peptide spans 1-30 (MLPGLRRLLQGPASACLLLTLLALPSVTPS). Cystine bridges form between Cys-31–Cys-37 and Cys-35–Cys-46. One can recognise an LRRNT domain in the interval 31–60 (CPMLCTCYSSPPTVSCQANNFSSVPLSLPP). An N-linked (GlcNAc...) asparagine glycan is attached at Asn-50. LRR repeat units lie at residues 61 to 82 (STQR…TFGP), 83 to 104 (NLLT…TFRH), 107 to 129 (ALEE…TFQG), 132 to 153 (RLQS…IFRG), 156 to 177 (SLQY…LFAD), 180 to 201 (NLSH…VFRG), 204 to 225 (SLDR…AFHG), and 228 to 249 (RLTI…ALAD). A glycan (N-linked (GlcNAc...) asparagine) is linked at Asn-93. N-linked (GlcNAc...) asparagine glycosylation occurs at Asn-236. An LRRCT domain is found at 261–312 (NPWACDCRARPLWAWFQRARVSSSDVTCATPPERQGRDLRALRDSDFQACPP). 2 cysteine pairs are disulfide-bonded: Cys-265–Cys-288 and Cys-267–Cys-310. Residues 286-399 (VTCATPPERQ…CQAPADSRGP (114 aa)) are disordered. Positions 294–306 (RQGRDLRALRDSD) are enriched in basic and acidic residues. The important for interaction with MAG stretch occupies residues 315–327 (PTRPGSRARGNSS). A compositionally biased stretch (basic and acidic residues) spans 351-360 (LPAEDSRGRQ). The GPI-anchor amidated glycine moiety is linked to residue Gly-398. Positions 399 to 420 (PALSAGLRTPLLCLLPLALHHL) are cleaved as a propeptide — removed in mature form.

The protein belongs to the Nogo receptor family. Interaction with MAG is controversial, and may be indirect. Interacts with MAG. Does not interact with OMG and RTN4. In terms of processing, undergoes zinc metalloproteinase-mediated ectodomain shedding in neuroblastoma cells; is released both as a full-length ectodomain and an N-terminal fragment containing the leucine-rich repeat (LRR) region of the protein. Post-translationally, N-glycosylated. Detected in brain. Detected in hippocampus neurons (at protein level).

The protein localises to the cell membrane. Its subcellular location is the membrane raft. It localises to the cell projection. It is found in the dendrite. The protein resides in the axon. The protein localises to the perikaryon. Its function is as follows. Cell surface receptor that plays a functionally redundant role in the inhibition of neurite outgrowth mediated by MAG. Plays a functionally redundant role in postnatal brain development. Contributes to normal axon migration across the brain midline and normal formation of the corpus callosum. Does not seem to play a significant role in regulating axon regeneration in the adult central nervous system. Protects motoneurons against apoptosis; protection against apoptosis is probably mediated by MAG. Like other family members, plays a role in restricting the number dendritic spines and the number of synapses that are formed during brain development. Signaling mediates activation of Rho and downstream reorganization of the actin cytoskeleton. The chain is Reticulon-4 receptor-like 2 from Mus musculus (Mouse).